The following is a 244-amino-acid chain: Large ribosomal subunit protein uL2 (244 aa).

Over residues 1–12 (MGKRILVQRRGR) the composition is skewed to basic residues. 2 disordered regions span residues 1–26 (MGKR…KRDG) and 193–225 (AMSP…KVGF).

This sequence belongs to the universal ribosomal protein uL2 family. Part of the 50S ribosomal subunit. Forms a bridge to the 30S subunit in the 70S ribosome.

In terms of biological role, one of the primary rRNA binding proteins. Required for association of the 30S and 50S subunits to form the 70S ribosome, for tRNA binding and peptide bond formation. It has been suggested to have peptidyltransferase activity; this is somewhat controversial. Makes several contacts with the 16S rRNA in the 70S ribosome. The sequence is that of Large ribosomal subunit protein uL2 from Pyrobaculum calidifontis (strain DSM 21063 / JCM 11548 / VA1).